Reading from the N-terminus, the 274-residue chain is Diaminopimelate epimerase (274 aa).

Substrate-binding residues include N11, Q44, and N64. C73 serves as the catalytic Proton donor. Residues G74–N75, N157, N190, and E208–R209 each bind substrate. Residue C217 is the Proton acceptor of the active site. G218–S219 is a substrate binding site.

Belongs to the diaminopimelate epimerase family. Homodimer.

Its subcellular location is the cytoplasm. It catalyses the reaction (2S,6S)-2,6-diaminopimelate = meso-2,6-diaminopimelate. It participates in amino-acid biosynthesis; L-lysine biosynthesis via DAP pathway; DL-2,6-diaminopimelate from LL-2,6-diaminopimelate: step 1/1. Its function is as follows. Catalyzes the stereoinversion of LL-2,6-diaminopimelate (L,L-DAP) to meso-diaminopimelate (meso-DAP), a precursor of L-lysine and an essential component of the bacterial peptidoglycan. The chain is Diaminopimelate epimerase from Haemophilus influenzae (strain PittGG).